A 590-amino-acid polypeptide reads, in one-letter code: Kinetochore protein ndc-80 (590 aa).

2 coiled-coil regions span residues lysine 269 to histidine 342 and glutamate 450 to aspartate 525.

It belongs to the NDC80/HEC1 family. As to quaternary structure, component of the NDC80 complex, which is composed of at least ndc-80 and him-10. The NDC80 complex interacts with knl-1. Interacts with the RZZ complex components rod-1 (via N-terminus) and zwl-1.

Its subcellular location is the nucleus. It localises to the chromosome. The protein resides in the centromere. The protein localises to the kinetochore. It is found in the cytoplasm. Its subcellular location is the cytoskeleton. Acts as a component of the essential kinetochore-associated ndc-80 complex, which is required for chromosome segregation in mitosis and meiosis and spindle checkpoint activity. Plays a role in kinetochore assembly and recruits the checkpoint protein mdf-2 and the spindly-like protein spdl-1 to unattached kinetochores. Mediates the formation of end-on kinetochore-microtubule attachments through recruitment of spdl-1. The ndc-80 complex synergistically enhances the affinity of the ska-1 complex for microtubules and may allow the ndc-80 complex to track depolymerizing microtubules. The protein is Kinetochore protein ndc-80 (ndc-80) of Caenorhabditis elegans.